The chain runs to 415 residues: MGHFFSANNRQRAITTRLQLDEEIVLFRQDQLISSFLEIAVDQTAETARILLQTTDWNIDQAVNLFLTNNAMYREVVDSTTSGTSDDSDSRSSFSFPPPSYILHEGLFEYAKYVSIEKNLWLVVNLQSRTELGSHILNRDVWANDAVSRTIESHFIVWQVYDDTNEGQKISSFYKIEAPPPVVFVINPITGQKMHMWSGVIEAESIVEDLMMFWDAGPHENIASLTRNRRTETAETCLSSYNFYETPAPSWGEEFEEEDNWSSRSNNNQVVAPTWEKELEEQDEWEIWSSRSDTDDFVPPFMGDEYEDPDEVKEEEICLVFPVLTEEPKGDCDRSVVCSLCVRFPDGRRKQRKFLKSEPIQLLWSFCYSHIDESEKKAFKLVQAIPGASKTLDCEADATFDQSGLANSLISVTWE.

Positions 19–69 (QLDEEIVLFRQDQLISSFLEIAVDQTAETARILLQTTDWNIDQAVNLFLTN) constitute a UBA domain. The 81-residue stretch at 333 to 413 (DRSVVCSLCV…GLANSLISVT (81 aa)) folds into the UBX domain.

This Arabidopsis thaliana (Mouse-ear cress) protein is Plant UBX domain-containing protein 16.